The following is a 29-amino-acid chain: GKPICGETCFKGKCYTPGCTCSYPICKKD.

A cross-link (cyclopeptide (Gly-Asp)) is located at residues 1–29; that stretch reads GKPICGETCFKGKCYTPGCTCSYPICKKD. Disulfide bonds link cysteine 5–cysteine 19, cysteine 9–cysteine 21, and cysteine 14–cysteine 26.

Post-translationally, this is a cyclic peptide. Contains 3 disulfide bonds.

In terms of biological role, probably participates in a plant defense mechanism (Potential). Binds to and induces leakage in phospholipd membranes, particularly ones containing 1-palmitoyl-2-oleophosphatidylethanolamine (POPE). In vitro, displays cytotoxicity against cultured cells. Not active against Gram-negative bacterium E.coli ATCC 25922 or Gram-positive bacterium S.aureus ATCC 25923 up to a concentration of 64 uM. The protein is Cyclotide mela-3 of Melicytus latifolius (Norfolk Island mahoe).